The chain runs to 313 residues: Homoserine O-acetyltransferase (313 aa).

Catalysis depends on Cys-142, which acts as the Acyl-thioester intermediate. Positions 163 and 191 each coordinate substrate. The active-site Proton acceptor is His-234. Residue Glu-236 is part of the active site. Arg-248 contacts substrate.

This sequence belongs to the MetA family.

Its subcellular location is the cytoplasm. It catalyses the reaction L-homoserine + acetyl-CoA = O-acetyl-L-homoserine + CoA. It participates in amino-acid biosynthesis; L-methionine biosynthesis via de novo pathway; O-acetyl-L-homoserine from L-homoserine: step 1/1. Functionally, transfers an acetyl group from acetyl-CoA to L-homoserine, forming acetyl-L-homoserine. The chain is Homoserine O-acetyltransferase from Streptococcus gordonii (strain Challis / ATCC 35105 / BCRC 15272 / CH1 / DL1 / V288).